Reading from the N-terminus, the 351-residue chain is uncharacterized protein (351 aa).

5 residues coordinate Mn(2+): aspartate 215, aspartate 226, histidine 290, glutamate 319, and glutamate 333.

The protein belongs to the peptidase M24B family. Mn(2+) is required as a cofactor.

This is an uncharacterized protein from Staphylococcus aureus (strain USA300).